The following is a 107-amino-acid chain: CLAVATA3/ESR (CLE)-related protein 10 (107 aa).

A signal peptide spans 1 to 23 (MKTNRNRPINILIVFFLLTTARA). N-linked (GlcNAc...) asparagine glycans are attached at residues asparagine 27 and asparagine 30. A disordered region spans residues 73-107 (SRQPLFSPPPPPTEIDQRYGVEKRLVPSGPNPLHN). Positions 87–97 (IDQRYGVEKRL) are enriched in basic and acidic residues. A hydroxyproline mark is found at proline 99 and proline 102. Proline 102 carries O-linked (Ara...) hydroxyproline glycosylation.

Belongs to the CLV3/ESR signal peptide family. In terms of processing, the O-glycosylation (arabinosylation) of the hydroxyproline Pro-102 enhances binding affinity of the CLE10p peptide for its receptor. As to expression, expressed in stems, apex, leaves, flowers, siliques and pollen.

The protein resides in the secreted. The protein localises to the extracellular space. Functionally, extracellular signal peptide that regulates cell fate. Represses root apical meristem maintenance. Regulates the transition of protophloem cells from proliferation to differentiation, thus impinging on postembryonic growth capacity of the root meristem; this signaling pathway requires CRN and CLV2. The polypeptide is CLAVATA3/ESR (CLE)-related protein 10 (Arabidopsis thaliana (Mouse-ear cress)).